The sequence spans 141 residues: Putative nickel-responsive regulator (141 aa).

Residues His80, His91, His93, and Cys99 each coordinate Ni(2+).

The protein belongs to the transcriptional regulatory CopG/NikR family. Requires Ni(2+) as cofactor.

Functionally, transcriptional regulator. This chain is Putative nickel-responsive regulator, found in Methanococcus vannielii (strain ATCC 35089 / DSM 1224 / JCM 13029 / OCM 148 / SB).